The following is a 242-amino-acid chain: Probable transcriptional regulatory protein XAC3151 (242 aa).

This sequence belongs to the TACO1 family.

Its subcellular location is the cytoplasm. This is Probable transcriptional regulatory protein XAC3151 from Xanthomonas axonopodis pv. citri (strain 306).